The primary structure comprises 1215 residues: Reverse gyrase 2 (1215 aa).

The RG N-terminal-type zinc finger occupies 3-44 (GGVNAVYMGLCYNCGGNIDEDRLEKGLPCARCLPSPPRRATP). 4 residues coordinate Zn(2+): Cys13, Cys16, Cys31, and Cys34. ATP-binding positions include Gln89 and 106–113 (APTGVGKS). The 157-residue stretch at 93–249 (AKRLVKGDSF…SLVKARLKLY (157 aa)) folds into the Helicase ATP-binding domain. Positions 209 to 212 (DDVD) match the DEAD box motif. The interval 614 to 1215 (VRVKTTLLVV…TGDVMGQSEA (602 aa)) is topoisomerase I. The region spanning 618–783 (TTLLVVESPT…NVRRGRFHEV (166 aa)) is the Toprim domain. Glu624 provides a ligand contact to Mg(2+). An RG C-terminal-type zinc finger spans residues 702–729 (IKRCLDCGAQHTSSSPFCPRCGSPRQVD). Positions 705, 708, 719, and 722 each coordinate Zn(2+). Asp752 contributes to the Mg(2+) binding site. Residues 799-1200 (EKSLIEAQKV…SVWRMVDEAV (402 aa)) form the Topo IA-type catalytic domain. The active-site O-(5'-phospho-DNA)-tyrosine intermediate is the Tyr943.

In the N-terminal section; belongs to the DEAD box helicase family. DDVD subfamily. The protein in the C-terminal section; belongs to the type IA topoisomerase family. In terms of assembly, monomer. The cofactor is Zn(2+). Requires Mg(2+) as cofactor.

Its subcellular location is the cytoplasm. It catalyses the reaction ATP + H2O = ADP + phosphate + H(+). In terms of biological role, modifies the topological state of DNA by introducing positive supercoils in an ATP-dependent process, increasing the linking number in steps of +1. Binds to single-stranded DNA, transiently cleaves and then rejoins the ends, introducing a positive supercoil in the process. The scissile phosphodiester is attacked by the catalytic tyrosine of the enzyme, resulting in the formation of a DNA-(5'-phosphotyrosyl)-enzyme intermediate. Probably involved in rewinding DNA strands in regions of the chromosome that have opened up to allow replication, transcription, DNA repair and/or for DNA protection. This is Reverse gyrase 2 from Aeropyrum pernix (strain ATCC 700893 / DSM 11879 / JCM 9820 / NBRC 100138 / K1).